Here is a 640-residue protein sequence, read N- to C-terminus: MGKIIGIDLGTTNSCVSILEGGAPKVIENAEGDRTTPSIIAFTNDGEILVGQSAKRQAVTNPHNTLFAVKRLIGRKFKDDVVQKDISMVPYKIVAADNGDAWVEVKGEKKAPPQISAEVLKKMKKTAEDYLGEKVTEAVITVPAYFNDSQRQATKDAGKIAGLDVKRIINEPTAAALAYGLDKGKGDHTIAVYDLGGGTFDISIIEIADVDGEHQFEVLSTNGDTFLGGEDFDMRLIEFLADSFKKDTGIDLHNDPLALQRLKEAAEKAKIELSSSQQTEVNLPYITADATGPKHLVVKLTRAKLESLVEDLVNKSLEPVKQAIKDSGKSISDIDDVILVGGQTRMPLVQKAVADYFGKEPRKDVNPDEAVAIGAAIQGAVLAGDVKDVLLLDVTPLTLGIETMGGVATPLIEKNTTIPTKKSQVFSTADDNQTAVTIHVVQGERKQASQNKSLGRFDLADIPPAPRGMPQIEVTFDIDANGILNVSAKDKATGKEQSIVIKASSGLSDDEIQKMVKDAEANAEADRKFAELVGARNTLEGLIHATQKTVKEAGDKATADEKAAIDAAVKEAEEAVKGDDLARIEAATTKLTEASSSLAQKLYAEQQAAGAGAQQADGTGKAADDGVVDAEFEEVKEDNK.

T199 carries the phosphothreonine; by autocatalysis modification. The segment covering 606–621 has biased composition (low complexity); that stretch reads QQAAGAGAQQADGTGK. The segment at 606-640 is disordered; that stretch reads QQAAGAGAQQADGTGKAADDGVVDAEFEEVKEDNK. Over residues 626-640 the composition is skewed to acidic residues; that stretch reads GVVDAEFEEVKEDNK.

It belongs to the heat shock protein 70 family.

Its function is as follows. Acts as a chaperone. The sequence is that of Chaperone protein DnaK from Cellvibrio japonicus (strain Ueda107) (Pseudomonas fluorescens subsp. cellulosa).